The primary structure comprises 610 residues: Dihydroxy-acid dehydratase (610 aa).

Asp81 contributes to the Mg(2+) binding site. Residue Cys122 participates in [2Fe-2S] cluster binding. Mg(2+)-binding residues include Asp123 and Lys124. Residue Lys124 is modified to N6-carboxylysine. Residue Cys193 participates in [2Fe-2S] cluster binding. Residue Glu489 coordinates Mg(2+). Ser515 serves as the catalytic Proton acceptor.

The protein belongs to the IlvD/Edd family. In terms of assembly, homodimer. The cofactor is [2Fe-2S] cluster. Mg(2+) is required as a cofactor.

It carries out the reaction (2R)-2,3-dihydroxy-3-methylbutanoate = 3-methyl-2-oxobutanoate + H2O. The catalysed reaction is (2R,3R)-2,3-dihydroxy-3-methylpentanoate = (S)-3-methyl-2-oxopentanoate + H2O. It participates in amino-acid biosynthesis; L-isoleucine biosynthesis; L-isoleucine from 2-oxobutanoate: step 3/4. The protein operates within amino-acid biosynthesis; L-valine biosynthesis; L-valine from pyruvate: step 3/4. Functions in the biosynthesis of branched-chain amino acids. Catalyzes the dehydration of (2R,3R)-2,3-dihydroxy-3-methylpentanoate (2,3-dihydroxy-3-methylvalerate) into 2-oxo-3-methylpentanoate (2-oxo-3-methylvalerate) and of (2R)-2,3-dihydroxy-3-methylbutanoate (2,3-dihydroxyisovalerate) into 2-oxo-3-methylbutanoate (2-oxoisovalerate), the penultimate precursor to L-isoleucine and L-valine, respectively. The chain is Dihydroxy-acid dehydratase from Xylella fastidiosa (strain M12).